Here is a 173-residue protein sequence, read N- to C-terminus: ATP synthase subunit b (173 aa).

The helical transmembrane segment at 25 to 45 (LINLVIVIGVLYWFLKGFLGG) threads the bilayer.

This sequence belongs to the ATPase B chain family. F-type ATPases have 2 components, F(1) - the catalytic core - and F(0) - the membrane proton channel. F(1) has five subunits: alpha(3), beta(3), gamma(1), delta(1), epsilon(1). F(0) has four main subunits: a(1), b(1), b'(1) and c(10-14). The alpha and beta chains form an alternating ring which encloses part of the gamma chain. F(1) is attached to F(0) by a central stalk formed by the gamma and epsilon chains, while a peripheral stalk is formed by the delta, b and b' chains.

The protein resides in the cellular thylakoid membrane. Functionally, f(1)F(0) ATP synthase produces ATP from ADP in the presence of a proton or sodium gradient. F-type ATPases consist of two structural domains, F(1) containing the extramembraneous catalytic core and F(0) containing the membrane proton channel, linked together by a central stalk and a peripheral stalk. During catalysis, ATP synthesis in the catalytic domain of F(1) is coupled via a rotary mechanism of the central stalk subunits to proton translocation. In terms of biological role, component of the F(0) channel, it forms part of the peripheral stalk, linking F(1) to F(0). This chain is ATP synthase subunit b, found in Synechococcus sp. (strain CC9311).